Reading from the N-terminus, the 100-residue chain is Urease subunit gamma (100 aa).

The protein belongs to the urease gamma subunit family. In terms of assembly, heterotrimer of UreA (gamma), UreB (beta) and UreC (alpha) subunits. Three heterotrimers associate to form the active enzyme.

The protein localises to the cytoplasm. It carries out the reaction urea + 2 H2O + H(+) = hydrogencarbonate + 2 NH4(+). Its pathway is nitrogen metabolism; urea degradation; CO(2) and NH(3) from urea (urease route): step 1/1. This is Urease subunit gamma from Azotobacter vinelandii (strain DJ / ATCC BAA-1303).